Here is a 685-residue protein sequence, read N- to C-terminus: UvrABC system protein C (685 aa).

Residues 15-93 (ALPGVYRYFD…IKTQNPRFNI (79 aa)) enclose the GIY-YIG domain. The 36-residue stretch at 214–249 (QELLQAMEARMMAYSGQLAFEQAAEVRNQMQALSRV) folds into the UVR domain. Over residues 365 to 388 (AQGGDHAPAAQGGDPPPAASSGGH) the composition is skewed to low complexity. The segment at 365–391 (AQGGDHAPAAQGGDPPPAASSGGHPLR) is disordered.

The protein belongs to the UvrC family. In terms of assembly, interacts with UvrB in an incision complex.

It is found in the cytoplasm. Functionally, the UvrABC repair system catalyzes the recognition and processing of DNA lesions. UvrC both incises the 5' and 3' sides of the lesion. The N-terminal half is responsible for the 3' incision and the C-terminal half is responsible for the 5' incision. This chain is UvrABC system protein C, found in Verminephrobacter eiseniae (strain EF01-2).